Reading from the N-terminus, the 263-residue chain is Ribosomal RNA small subunit methyltransferase A (263 aa).

S-adenosyl-L-methionine contacts are provided by Asn20, Leu22, Gly47, Glu68, Asp90, and Asn110.

This sequence belongs to the class I-like SAM-binding methyltransferase superfamily. rRNA adenine N(6)-methyltransferase family. RsmA subfamily.

The protein resides in the cytoplasm. It catalyses the reaction adenosine(1518)/adenosine(1519) in 16S rRNA + 4 S-adenosyl-L-methionine = N(6)-dimethyladenosine(1518)/N(6)-dimethyladenosine(1519) in 16S rRNA + 4 S-adenosyl-L-homocysteine + 4 H(+). Functionally, specifically dimethylates two adjacent adenosines (A1518 and A1519) in the loop of a conserved hairpin near the 3'-end of 16S rRNA in the 30S particle. May play a critical role in biogenesis of 30S subunits. This is Ribosomal RNA small subunit methyltransferase A from Chlorobium limicola (strain DSM 245 / NBRC 103803 / 6330).